A 2537-amino-acid polypeptide reads, in one-letter code: MKPLPSQQPPPKMGDFYDPEHPTPEEEENEAKIENVQKTGFIKGPVFKGVASSRFLPKGTKTKVNLEEQGRQKVSFSFSFTKKTLQNRFLTALSNEKQSDSPNSPAPPLQVDSNPKVKMDAGDTFPATEESSPPKSRVELGRIHFKKHLLHVTSRPQLAASTTAASPLPPTTQLPAVLAESMIDSPPSSPPPPPPPPQASSPSPPAQISEPVALPQPPATALMTSPPGPLPGDVAVRAQKESPVKSGPEVLEVDTKQDIVSNSLEEHTVQTLKEQADHLLQKEDSHIGKEEEVSDGSKISLSSKKASSKKKSSQFEGTFLGSESDEDSVRTSSSQRSHDLKSSTSIDKERDFKKSSAPSKSEDLGKSSRSKTERDDRYCSYSKLERDTRYVSSRCRSERDRRRSRSRSRSDRASRTSLSYSRSERSHYYDSERRYHRSSPYRERTRYSRPYTDNRARESSDSEDEYKKTYPRRTSAHSYRDLRTSSSYSKFDRDCKTETSYLEMERRGKYTSKLERESKRTSEHETIKRCCSPPNELGFRRGSSYSKHDNSTSRYKSALSKSISKNDKFKNSFCCTELNEENKQSHSFSLQTPCSKGSELRTINKISEREKTGSPTPSNQLNDSPTFKKLDESPVLKPEFIGHDGRESIKELELSKVKNDQLRNFCSIELNVNGSPETEADVATFCTSKTDAISMTSDDSVTGSEVSPLIKACMLSSNGFQNVGRCRERDSDDTCRQHNTSKSPFREMEPLLSPHHDKLMSLPVKTIDYPKTLIKEPVDKRHSCCKTKDSDIYCSPNENPEAENAEPSAMTISSHSFVNVHLESKTVICDNREPTDRHSENTCDEYKQSIGSTSSASHNHFDGLYEPIGSSGISSLQSPPSGIRCEENTSPTLDAVESKKGIDFLKYARKETDVGSALPDSGKGFSWENRHNNVLSGQSLQEAQEEGNSILHERRGRPEIPLDEEQRGHTHISDDSEVVFPYDLNLTMEDSDGITYTLKCDSSGNAPEIVSTVHEDYSGSSASSSDESDSEDTESDDSSIPRNRLQSVVVVPKNSTLPMEETSPCSSRSSQSYKHYSDRWEDGLETRRHAYEEEYESKGCSQTEKYFLHKGTERSAESCYSQFGRKADNHLPDIAHAQSDGVDSTSQTDSRSDHLGHLNPEDTLRAKTSRPQELPVYSDDFEDLPNKSRQQMIFSNRPDSSRLGKTELSFSSSCDISRMDGLHSSEELRNLGWDFSQQERPTTTYQQPDSSYGTCGTHKYQQSTEHYGGTHNYWQGNGYWDPRSAGRPPGTGLAYDRIQGQVPDSLTDDREEEEHWDQRSGSHFSSPSNKFFFHQKDKGSVQAPEISSNSIKDALVMNERKDFSKNFEKNDIKERGPPKKRRQELESDSESDGELQARKKVRVEMEQGESSVPQHSELMGPSCAMDDFRDPQRWKEFAKLGKMPCYFDLIEENVYLTERKKNKSHRDIKRMQCECTPLSKDERAQGEVACGEDCLNRLLMIECSSRCPNGDYCSNRRFQRKQHADVEVILTEKKGWGLRAAKDLPSNTFVLEYCGEVLDHKEFKARVKEYARNKNIHYYFMALKNDEIIDATQKGNCSRFMNHSCEPNCETQKWTVNGQLRVGFFTTKLVPSGSELTFDYQFQRYGKEAQKCFCGSANCRGYLGGENRVSIRAAGGKMKKERSRKKDSVDGELEALMENGEGLSDKNQVLSLSRLMVRIETLEQKLTCLKLIQNTHSQSCLKSFLERHGLSLLWIWMAELGDGRESNQKLQEEIIKTLEHLPIPTKNMLEESKVLPIIQRWSQTKTAVPQLSEGDGYSSENTSRAHTPLNTPDPSAKPSTEMDTDTPKKLIFRRLKIISENSMDSAVSDVTSELECKDGKEDLDQLETVTVEEDEELQSQQLLPQQLCESKVESEATIEVSKLPTSEPEADTETEPKDSNGTKLEETIAEETPSQDEEEGVSDVESERSQEPPDKTVDISDLATKLLDSWKDLKEVYRIPKKSQTEKESTVAERGRDAAAFRDQTAPKTPNRSRERDPDKQSQNKEKRKRRGSLSPPSSAYERGTKRPDDRYDTPTSKKKVRIKDRNKLSTEERRKLFEQEVAQREAQKQQQQMQNLGMTSPLPFDSLGYNASHHPFAGYPPGYPMQAYVDPSNPNAGKVLLPTPSMDPVCSPAPYDHAQPLVGHSTESLAAPPSVPVVPHVAASVEVSSSQYVAQNESVVHQDSNVPVMPVQAPGPVQGQNYNVWESNQQSVSVQQQYSPAQSQTTIYYQGQTCSTVYSVTSPYSQTTPPIVQSYAQPSLQYIQGQQIFTAHPQGVVVQPTAAVTSIVAPGQPQSLQPPEMVVTNNLLDLPPPSPPKPKTIVLPPNWKTARDPEGKIYYYHVITRQTQWDPPTWESPGDDASLEHEAEMDLGTPTYDENPMKTSKKPKTAEADTSSELAKKSKEVFRKEMSQFIVQCLNPYRKPDCKVGRITTTEDFKHLARKLTHGVMNKELKYCKNPEDLECNENVKHKTKEYIKKYMQKFGAVYKPKEDTELE.

The span at 1–12 shows a compositional bias: pro residues; that stretch reads MKPLPSQQPPPK. Disordered stretches follow at residues 1–31, 91–142, 156–483, 510–554, and 607–629; these read MKPL…ENEA, TALS…ELGR, PQLA…RDLR, YTSK…STSR, and SERE…TFKK. Basic and acidic residues predominate over residues 18–31; it reads DPEHPTPEEEENEA. Over residues 91–103 the composition is skewed to polar residues; it reads TALSNEKQSDSPN. Residue Ser-132 is modified to Phosphoserine. Over residues 156–166 the composition is skewed to low complexity; that stretch reads PQLAASTTAAS. Positions 187 to 205 are enriched in pro residues; it reads PSSPPPPPPPPQASSPSPP. The residue at position 242 (Ser-242) is a Phosphoserine. The segment covering 264–291 has biased composition (basic and acidic residues); that stretch reads LEEHTVQTLKEQADHLLQKEDSHIGKEE. Phosphoserine occurs at positions 322, 324, and 345. 4 stretches are compositionally biased toward basic and acidic residues: residues 336 to 401, 422 to 433, 440 to 468, and 510 to 528; these read RSHD…ERDR, RSERSHYYDSER, PYRE…EYKK, and YTSK…ETIK. A Glycyl lysine isopeptide (Lys-Gly) (interchain with G-Cter in SUMO2) cross-link involves residue Lys-360. Ser-423 carries the post-translational modification Phosphoserine. A phosphoserine mark is found at Ser-532, Ser-614, and Ser-624. A compositionally biased stretch (polar residues) spans 613–625; sequence GSPTPSNQLNDSP. Thr-626 is modified (phosphothreonine). Phosphoserine is present on Ser-633. A Glycyl lysine isopeptide (Lys-Gly) (interchain with G-Cter in SUMO2) cross-link involves residue Lys-637. A phosphoserine mark is found at Ser-697, Ser-707, Ser-743, and Ser-753. The interval 729–749 is disordered; it reads RDSDDTCRQHNTSKSPFREME. Lys-775 participates in a covalent cross-link: Glycyl lysine isopeptide (Lys-Gly) (interchain with G-Cter in SUMO2). 4 disordered regions span residues 829 to 894, 941 to 974, 1015 to 1078, and 1135 to 1185; these read CDNR…PTLD, QEAQ…HISD, EDYS…HYSD, and AHAQ…EDLP. The span at 830–847 shows a compositional bias: basic and acidic residues; sequence DNREPTDRHSENTCDEYK. Over residues 849-858 the composition is skewed to polar residues; sequence SIGSTSSASH. The segment covering 867–883 has biased composition (low complexity); it reads PIGSSGISSLQSPPSGI. Basic and acidic residues predominate over residues 951 to 974; that stretch reads LHERRGRPEIPLDEEQRGHTHISD. Residues 1026 to 1037 show a composition bias toward acidic residues; sequence DESDSEDTESDD. At Ser-1077 the chain carries Phosphoserine. Residues 1150-1165 are compositionally biased toward basic and acidic residues; it reads SRSDHLGHLNPEDTLR. Position 1201 is a phosphoserine (Ser-1201). Disordered regions lie at residues 1232–1254, 1280–1346, and 1366–1396; these read GWDF…SYGT, WDPR…APEI, and NFEK…GELQ. 2 stretches are compositionally biased toward polar residues: residues 1235-1254 and 1319-1329; these read FSQQ…SYGT and RSGSHFSSPSN. The span at 1366-1377 shows a compositional bias: basic and acidic residues; sequence NFEKNDIKERGP. Phosphoserine is present on residues Ser-1387, Ser-1389, and Ser-1391. Positions 1392–1688 are interaction with TUBA1A; the sequence is DGELQARKKV…KKERSRKKDS (297 aa). Residues 1468 to 1522 form the AWS domain; that stretch reads IKRMQCECTPLSKDERAQGEVACGEDCLNRLLMIECSSRCPNGDYCSNRRFQRKQ. Cys-1473, Cys-1475, Cys-1490, Cys-1494, Cys-1503, Cys-1507, and Cys-1513 together coordinate Zn(2+). The 118-residue stretch at 1524-1641 folds into the SET domain; sequence ADVEVILTEK…SGSELTFDYQ (118 aa). Residues 1534-1536, 1577-1579, and 1602-1603 each bind S-adenosyl-L-methionine; these read KGW, HYY, and NH. Cys-1605 provides a ligand contact to Zn(2+). In terms of domain architecture, Post-SET spans 1648–1664; that stretch reads EAQKCFCGSANCRGYLG. Residue Gln-1650 participates in S-adenosyl-L-methionine binding. Cys-1652 is a binding site for Zn(2+). Phe-1653 is an S-adenosyl-L-methionine binding site. Zn(2+) contacts are provided by Cys-1654 and Cys-1659. Phosphoserine occurs at positions 1670, 1818, and 1819. The interval 1806 to 1848 is disordered; that stretch reads TAVPQLSEGDGYSSENTSRAHTPLNTPDPSAKPSTEMDTDTPK. The span at 1818–1833 shows a compositional bias: polar residues; the sequence is SSENTSRAHTPLNTPD. A phosphothreonine mark is found at Thr-1827 and Thr-1846. Ser-1862 and Ser-1926 each carry phosphoserine. Disordered stretches follow at residues 1914-1981 and 1993-2110; these read SEAT…DISD and LKEV…AQKQ. A compositionally biased stretch (basic and acidic residues) spans 1934–1946; that stretch reads TEPKDSNGTKLEE. The span at 1947-1964 shows a compositional bias: acidic residues; sequence TIAEETPSQDEEEGVSDV. Ser-1954, Ser-1962, and Ser-1969 each carry phosphoserine. 3 stretches are compositionally biased toward basic and acidic residues: residues 1965-1978, 1993-2020, and 2032-2045; these read ESER…KTVD, LKEV…DAAA, and RSRE…SQNK. Residues Ser-2053 and Ser-2055 each carry the phosphoserine modification. Basic and acidic residues-rich tracts occupy residues 2063–2073 and 2084–2108; these read RGTKRPDDRYD and KDRN…REAQ. Residues 2090–2119 adopt a coiled-coil conformation; sequence STEERRKLFEQEVAQREAQKQQQQMQNLGM. A low charge region region spans residues 2110 to 2339; that stretch reads QQQQMQNLGM…APGQPQSLQP (230 aa). Residues 2362–2395 form the WW domain; it reads IVLPPNWKTARDPEGKIYYYHVITRQTQWDPPTW. The tract at residues 2412 to 2438 is disordered; sequence LGTPTYDENPMKTSKKPKTAEADTSSE. Residues 2430–2537 form an interaction with POLR2A region; sequence TAEADTSSEL…YKPKEDTELE (108 aa).

It belongs to the class V-like SAM-binding methyltransferase superfamily. Histone-lysine methyltransferase family. SET2 subfamily. Specifically interacts with hyperphosphorylated C-terminal domain (CTD) of RNA polymerase II large subunit (POLR2A): binds to CTD heptad repeats doubly phosphorylated on 'Ser-2' and 'Ser-5' of each heptad. Interacts with HTT. Interacts with IWS1. Interacts with p53/TP53; leading to regulate p53/TP53 target genes. Component of a complex with HNRNPL. Interacts with TUBA1A; the interaction is independent on alpha-tubulin acetylation on 'Lys-40'. In terms of processing, may be automethylated.

It localises to the nucleus. The protein resides in the chromosome. The catalysed reaction is L-lysyl(36)-[histone H3] + 3 S-adenosyl-L-methionine = N(6),N(6),N(6)-trimethyl-L-lysyl(36)-[histone H3] + 3 S-adenosyl-L-homocysteine + 3 H(+). It catalyses the reaction L-lysyl-[protein] + S-adenosyl-L-methionine = N(6)-methyl-L-lysyl-[protein] + S-adenosyl-L-homocysteine + H(+). It carries out the reaction L-lysyl-[protein] + 3 S-adenosyl-L-methionine = N(6),N(6),N(6)-trimethyl-L-lysyl-[protein] + 3 S-adenosyl-L-homocysteine + 3 H(+). With respect to regulation, specifically inhibited by sinefungin derivatives. In terms of biological role, histone methyltransferase that specifically trimethylates 'Lys-36' of histone H3 (H3K36me3) using dimethylated 'Lys-36' (H3K36me2) as substrate. It is capable of trimethylating unmethylated H3K36 (H3K36me0) in vitro. Represents the main enzyme generating H3K36me3, a specific tag for epigenetic transcriptional activation. Plays a role in chromatin structure modulation during elongation by coordinating recruitment of the FACT complex and by interacting with hyperphosphorylated POLR2A. Acts as a key regulator of DNA mismatch repair in G1 and early S phase by generating H3K36me3, a mark required to recruit MSH6 subunit of the MutS alpha complex: early recruitment of the MutS alpha complex to chromatin to be replicated allows a quick identification of mismatch DNA to initiate the mismatch repair reaction. Required for DNA double-strand break repair in response to DNA damage: acts by mediating formation of H3K36me3, promoting recruitment of RAD51 and DNA repair via homologous recombination (HR). Acts as a tumor suppressor. H3K36me3 also plays an essential role in the maintenance of a heterochromatic state, by recruiting DNA methyltransferase DNMT3A. H3K36me3 is also enhanced in intron-containing genes, suggesting that SETD2 recruitment is enhanced by splicing and that splicing is coupled to recruitment of elongating RNA polymerase. Required during angiogenesis. Required for endoderm development by promoting embryonic stem cell differentiation toward endoderm: acts by mediating formation of H3K36me3 in distal promoter regions of FGFR3, leading to regulate transcription initiation of FGFR3. In addition to histones, also mediates methylation of other proteins, such as tubulins and STAT1. Trimethylates 'Lys-40' of alpha-tubulins such as TUBA1B (alpha-TubK40me3); alpha-TubK40me3 is required for normal mitosis and cytokinesis and may be a specific tag in cytoskeletal remodeling. Involved in interferon-alpha-induced antiviral defense by mediating both monomethylation of STAT1 at 'Lys-525' and catalyzing H3K36me3 on promoters of some interferon-stimulated genes (ISGs) to activate gene transcription. The sequence is that of Histone-lysine N-methyltransferase SETD2 from Mus musculus (Mouse).